The following is a 350-amino-acid chain: Heme A synthase (350 aa).

8 consecutive transmembrane segments (helical) span residues 14 to 34, 95 to 115, 125 to 145, 162 to 182, 202 to 222, 260 to 280, 296 to 316, and 317 to 337; these read VAIW…IGGF, YVHR…FIYF, VVIK…AGWY, LALH…QFFD, VGII…VAGL, VQFI…ILTV, IIQI…AIAI, and AHQV…CYLR. A heme-binding site is contributed by His264. His318 contacts heme.

The protein belongs to the COX15/CtaA family. Type 2 subfamily. As to quaternary structure, interacts with CtaB. Requires heme b as cofactor.

It localises to the cell membrane. It carries out the reaction Fe(II)-heme o + 2 A + H2O = Fe(II)-heme a + 2 AH2. It participates in porphyrin-containing compound metabolism; heme A biosynthesis; heme A from heme O: step 1/1. In terms of biological role, catalyzes the conversion of heme O to heme A by two successive hydroxylations of the methyl group at C8. The first hydroxylation forms heme I, the second hydroxylation results in an unstable dihydroxymethyl group, which spontaneously dehydrates, resulting in the formyl group of heme A. This chain is Heme A synthase, found in Wolbachia pipientis wMel.